The primary structure comprises 335 residues: UPF0353 protein Mflv_3659 (335 aa).

A run of 2 helical transmembrane segments spans residues 18-38 (WFFLFFFVVIGLVALYIVVQL) and 67-87 (LPAVLMILSLVSFTIAMAGPT). The region spanning 98-294 (VVMLVIDVSQ…EQLKQVFTNL (197 aa)) is the VWFA domain. A helical membrane pass occupies residues 309–329 (VGWLRLGAGVLALAALGALLI).

The protein belongs to the UPF0353 family.

The protein localises to the cell membrane. This is UPF0353 protein Mflv_3659 from Mycolicibacterium gilvum (strain PYR-GCK) (Mycobacterium gilvum (strain PYR-GCK)).